Consider the following 205-residue polypeptide: uncharacterized protein (205 aa).

Positions 1 to 82 constitute a GST N-terminal domain; sequence MIKVYGVPGW…MVLDRRPDLA (82 aa). Residues V53 and 66 to 67 each bind glutathione; that span reads ET. In terms of domain architecture, GST C-terminal spans 86-205; it reads GRAERQLFQR…QEVLKRNEII (120 aa).

This sequence belongs to the GST superfamily. Beta family.

This is an uncharacterized protein from Escherichia coli (strain K12).